A 161-amino-acid polypeptide reads, in one-letter code: 2-C-methyl-D-erythritol 2,4-cyclodiphosphate synthase (161 aa).

Residues Asp10 and His12 each contribute to the a divalent metal cation site. 4-CDP-2-C-methyl-D-erythritol 2-phosphate is bound by residues 10-12 (DVH) and 36-37 (HS). His44 lines the a divalent metal cation pocket. 4-CDP-2-C-methyl-D-erythritol 2-phosphate-binding positions include 58–60 (DIG), 63–67 (FPDTD), 102–108 (AQVPKMA), 134–137 (TTTE), Phe141, and Arg144.

Belongs to the IspF family. In terms of assembly, homotrimer. A divalent metal cation is required as a cofactor.

It carries out the reaction 4-CDP-2-C-methyl-D-erythritol 2-phosphate = 2-C-methyl-D-erythritol 2,4-cyclic diphosphate + CMP. Its pathway is isoprenoid biosynthesis; isopentenyl diphosphate biosynthesis via DXP pathway; isopentenyl diphosphate from 1-deoxy-D-xylulose 5-phosphate: step 4/6. In terms of biological role, involved in the biosynthesis of isopentenyl diphosphate (IPP) and dimethylallyl diphosphate (DMAPP), two major building blocks of isoprenoid compounds. Catalyzes the conversion of 4-diphosphocytidyl-2-C-methyl-D-erythritol 2-phosphate (CDP-ME2P) to 2-C-methyl-D-erythritol 2,4-cyclodiphosphate (ME-CPP) with a corresponding release of cytidine 5-monophosphate (CMP). This chain is 2-C-methyl-D-erythritol 2,4-cyclodiphosphate synthase, found in Shewanella baltica (strain OS223).